Here is a 659-residue protein sequence, read N- to C-terminus: mRNA export factor ICP27 homolog (659 aa).

Zn(2+)-binding residues include Cys130, His266, Cys268, and Cys273. The CHC2-type zinc-finger motif lies at 130 to 273 (CMMSNGERPP…CEHACNDNAC (144 aa)). Residues 317-659 (GSFDDSRSAT…GEDGESDMTL (343 aa)) form a disordered region. The span at 324–336 (SATSGDGSSCSSA) shows a compositional bias: low complexity. The span at 354-365 (SDQTDTSNNGTV) shows a compositional bias: polar residues. The segment covering 387 to 397 (SPLDRPNDYHY) has biased composition (basic and acidic residues). The span at 413-427 (GSGSSSTEAVSTASA) shows a compositional bias: low complexity. The span at 483-499 (SPERRSSEERSSSDQRR) shows a compositional bias: basic and acidic residues. The segment covering 503 to 513 (LSRSASATSGG) has biased composition (polar residues). Low complexity predominate over residues 553–575 (SRSNTPPSSPSKPDSAPAASASP). Residues 598–610 (ESVRVSERFETGD) show a composition bias toward basic and acidic residues. 2 stretches are compositionally biased toward acidic residues: residues 617-628 (ETEDESDDEDDQ) and 646-659 (SETD…DMTL).

The protein belongs to the HHV-1 ICP27 protein family.

It is found in the virion tegument. Its subcellular location is the virion. It localises to the host nucleus. The protein resides in the host cytoplasm. Its function is as follows. Immediate early (EI) protein that plays many roles during productive infection including regulation of viral gene expression and nuclear export of intronless viral RNAs. The protein is mRNA export factor ICP27 homolog of Elephantid herpesvirus 1 (isolate Asian elephant/Berlin/Kiba/1998) (EIHV-1).